Here is a 58-residue protein sequence, read N- to C-terminus: MSKTVVRKNESLDDALRRFKRSVTKAGTLQESRKREFYEKPSVKRKRKSEAARKRKKF.

Residues glutamate 36–phenylalanine 58 are disordered. Basic residues predominate over residues valine 43–phenylalanine 58.

Belongs to the bacterial ribosomal protein bS21 family.

The sequence is that of Small ribosomal subunit protein bS21 from Streptococcus uberis (strain ATCC BAA-854 / 0140J).